We begin with the raw amino-acid sequence, 95 residues long: Class I hydrophobin 13 (95 aa).

Intrachain disulfides connect Cys-14–Cys-74, Cys-21–Cys-68, Cys-22–Cys-55, and Cys-75–Cys-88. 2 N-linked (GlcNAc...) asparagine glycosylation sites follow: Asn-23 and Asn-77.

This sequence belongs to the fungal hydrophobin family. Self-assembles to form functional amyloid fibrils called rodlets. Self-assembly into fibrillar rodlets occurs spontaneously at hydrophobic:hydrophilic interfaces and the rodlets further associate laterally to form amphipathic monolayers.

The protein localises to the secreted. It is found in the cell wall. In terms of biological role, aerial growth, conidiation, and dispersal of filamentous fungi in the environment rely upon a capability of their secreting small amphipathic proteins called hydrophobins (HPBs) with low sequence identity. Class I can self-assemble into an outermost layer of rodlet bundles on aerial cell surfaces, conferring cellular hydrophobicity that supports fungal growth, development and dispersal; whereas Class II form highly ordered films at water-air interfaces through intermolecular interactions but contribute nothing to the rodlet structure. This Pleurotus ostreatus (strain PC15) (Oyster mushroom) protein is Class I hydrophobin 13.